The following is a 578-amino-acid chain: L-2,3-diaminopropanoate--citrate ligase (578 aa).

This sequence belongs to the IucA/IucC family. Forms a mixture of monomer and dimer in solution.

It carries out the reaction (S)-2,3-diaminopropanoate + citrate + ATP = 2-[(L-alanin-3-ylcarbamoyl)methyl]-2-hydroxybutanedioate + AMP + diphosphate. Its pathway is siderophore biosynthesis. Its function is as follows. Catalyzes the synthesis of citryl-L-2,3-diaminopropionic acid from L-2,3-diaminopropionic acid (L-Dap) and citrate, the first step in staphyloferrin B biosynthesis. In Staphylococcus aureus (strain NCTC 8325 / PS 47), this protein is L-2,3-diaminopropanoate--citrate ligase.